Consider the following 159-residue polypeptide: Phosphoribosylaminoimidazole carboxylase (159 aa).

S11, D14, S38, K41, G67, and S69 together coordinate substrate.

It carries out the reaction 5-amino-1-(5-phospho-D-ribosyl)imidazole-4-carboxylate + H(+) = 5-amino-1-(5-phospho-beta-D-ribosyl)imidazole + CO2. Its pathway is purine metabolism; IMP biosynthesis via de novo pathway; 5-amino-1-(5-phospho-D-ribosyl)imidazole-4-carboxylate from 5-amino-1-(5-phospho-D-ribosyl)imidazole (carboxylase route): step 1/1. Functionally, catalyzes the reversible conversion of 5-aminoimidazole ribonucleotide (AIR) and CO(2) to 4-carboxy-5-aminoimidazole ribonucleotide (CAIR). Does not accept N5-carboxyaminoimidazole ribonucleotide (N5-CAIR) as a substrate. The chain is Phosphoribosylaminoimidazole carboxylase from Treponema denticola (strain ATCC 35405 / DSM 14222 / CIP 103919 / JCM 8153 / KCTC 15104).